Consider the following 349-residue polypeptide: Protein BPS1, chloroplastic (349 aa).

The N-terminal 43 residues, 1-43, are a transit peptide targeting the chloroplast; it reads MARPQDPPRGFFPFGNPFKNLSSKNSVLSSKLLPLLNNFETNL.

In terms of tissue distribution, expressed in roots, hypocotyls, cotyledons, leaves, flowers and siliques.

The protein resides in the plastid. It is found in the chloroplast. Required for normal root and shoot development. Prevents constitutive production of a root mobile carotenoid-derived signaling compound that is capable of arresting shoot and leaf development. This chain is Protein BPS1, chloroplastic, found in Arabidopsis thaliana (Mouse-ear cress).